The chain runs to 809 residues: Valine--tRNA ligase (809 aa).

Positions 60-70 (PFTSGELHMGH) match the 'HIGH' region motif. Positions 546-550 (RMSKS) match the 'KMSKS' region motif. Lys-549 is an ATP binding site.

This sequence belongs to the class-I aminoacyl-tRNA synthetase family. ValS type 2 subfamily.

The protein localises to the cytoplasm. It carries out the reaction tRNA(Val) + L-valine + ATP = L-valyl-tRNA(Val) + AMP + diphosphate. Its function is as follows. Catalyzes the attachment of valine to tRNA(Val). As ValRS can inadvertently accommodate and process structurally similar amino acids such as threonine, to avoid such errors, it has a 'posttransfer' editing activity that hydrolyzes mischarged Thr-tRNA(Val) in a tRNA-dependent manner. In Sulfurisphaera tokodaii (strain DSM 16993 / JCM 10545 / NBRC 100140 / 7) (Sulfolobus tokodaii), this protein is Valine--tRNA ligase.